Consider the following 61-residue polypeptide: Tryptophyllin-1 (61 aa).

The signal sequence occupies residues 1-22 (MDILKKSLFLALFLGLVSISFC). The propeptide occupies 23-53 (DEEKRQDDDESNESEEKKEIHEEGSQEERRE). Residues 24 to 61 (EEKRQDDDESNESEEKKEIHEEGSQEERREKPPPWVPV) form a disordered region. A compositionally biased stretch (basic and acidic residues) spans 36–55 (SEEKKEIHEEGSQEERREKP).

In terms of tissue distribution, expressed by the skin glands.

It is found in the secreted. Functionally, the synthetic peptide inhibits bradykinin-induced relaxation of rat tail artery smooth muscle, and also has anti-proliferative effects on the human prostate cancer cell lines LNCaP, PC3 and DU145. In Phyllomedusa sauvagei (Sauvage's leaf frog), this protein is Tryptophyllin-1.